Reading from the N-terminus, the 422-residue chain is uncharacterized protein (422 aa).

The N-terminal stretch at 1 to 23 (MLSLIPFTVCAFLALITSKGGSA) is a signal peptide.

As to expression, component of the acid-insoluble organic matrix of the aragonitic skeleton (at protein level).

The protein localises to the secreted. This is an uncharacterized protein from Acropora millepora (Staghorn coral).